We begin with the raw amino-acid sequence, 566 residues long: Solute carrier family 2, facilitated glucose transporter member 9 (566 aa).

The tract at residues 1–31 is disordered; that stretch reads MARKQNRNSKELGLAPLADDTSHAGPPGPGR. At 1 to 51 the chain is on the cytoplasmic side; sequence MARKQNRNSKELGLAPLADDTSHAGPPGPGRALLECDHLRSGLPDGRRRKD. A Phosphoserine modification is found at S9. Residues 52–72 form a helical membrane-spanning segment; it reads WSCSLLVASLAGAFGSSFLYG. Residues 73-107 are Extracellular-facing; sequence YNLSVVNAPTPYIKAFYNESWERRHGRPIDPDTLT. N74 and N90 each carry an N-linked (GlcNAc...) asparagine glycan. Residues 108–128 form a helical membrane-spanning segment; sequence LLWSVTVSIFAIGGLVGTLMV. The Cytoplasmic portion of the chain corresponds to 129 to 140; the sequence is KMIGKVLGRKHT. Residues 141–161 traverse the membrane as a helical segment; sequence LLANNGFAISAALLMACSLQA. The Extracellular segment spans residues 162 to 171; it reads GAFEMLIVGR. A helical membrane pass occupies residues 172–192; it reads FIMGIDGGIALSVLPMYLSEI. The Cytoplasmic portion of the chain corresponds to 193 to 200; that stretch reads SPKEIRGS. The helical transmembrane segment at 201 to 221 threads the bilayer; the sequence is LGQVTAIFICIGVFTGQLLGL. The Extracellular segment spans residues 222 to 231; sequence PELLGKESTW. Residues 232-252 form a helical membrane-spanning segment; that stretch reads PYLFGVIVVPAVVQLLSLPFL. Residues 253–316 are Cytoplasmic-facing; it reads PDSPRYLLLE…LRAPYVRWQV (64 aa). Residues 317–337 form a helical membrane-spanning segment; the sequence is VTVIVTMACYQLCGLNAIWFY. The Extracellular segment spans residues 338 to 354; that stretch reads TNSIFGKAGIPPAKIPY. The helical transmembrane segment at 355-375 threads the bilayer; it reads VTLSTGGIETLAAIFSGLVIE. At 376-381 the chain is on the cytoplasmic side; it reads HLGRRP. A helical transmembrane segment spans residues 382-402; sequence LLIGGFGLMALFFGTLTVTLT. Residues 403–415 lie on the Extracellular side of the membrane; the sequence is LQDRAPWVPYLSI. A helical transmembrane segment spans residues 416–436; that stretch reads VGILAIIASFCSGPGGIPFIL. The Cytoplasmic segment spans residues 437 to 451; it reads TGEFFQQSQRPAAFI. Residues 452–472 form a helical membrane-spanning segment; sequence IAGTVNWLSNFAVGLLFPFIQ. At 473-478 the chain is on the extracellular side; sequence KSLDTY. Residues 479–499 traverse the membrane as a helical segment; that stretch reads CFLVFATICMTGAIYLYFVLP. Over 500-566 the chain is Cytoplasmic; it reads ETKNRTYAEI…YMDDLTFQET (67 aa). A Phosphoserine modification is found at S514. Positions 524-539 are enriched in basic and acidic residues; sequence EKIDSAVTDGKTKGRP. The disordered stretch occupies residues 524 to 543; it reads EKIDSAVTDGKTKGRPEQVS.

It belongs to the major facilitator superfamily. Sugar transporter (TC 2.A.1.1) family.

It localises to the basolateral cell membrane. The protein localises to the apical cell membrane. The catalysed reaction is urate(out) = urate(in). Its function is as follows. High-capacity urate transporter, which may play a role in the urate reabsorption by proximal tubules. May have a residual high-affinity, low-capacity glucose and fructose transporter activity. Transports urate at rates 45- to 60-fold faster than glucose. Does not transport galactose. May mediate small uptake of adenine but not of other nucleobases. This chain is Solute carrier family 2, facilitated glucose transporter member 9, found in Pongo abelii (Sumatran orangutan).